Here is a 147-residue protein sequence, read N- to C-terminus: SsrA-binding protein (147 aa).

Belongs to the SmpB family.

The protein resides in the cytoplasm. Required for rescue of stalled ribosomes mediated by trans-translation. Binds to transfer-messenger RNA (tmRNA), required for stable association of tmRNA with ribosomes. tmRNA and SmpB together mimic tRNA shape, replacing the anticodon stem-loop with SmpB. tmRNA is encoded by the ssrA gene; the 2 termini fold to resemble tRNA(Ala) and it encodes a 'tag peptide', a short internal open reading frame. During trans-translation Ala-aminoacylated tmRNA acts like a tRNA, entering the A-site of stalled ribosomes, displacing the stalled mRNA. The ribosome then switches to translate the ORF on the tmRNA; the nascent peptide is terminated with the 'tag peptide' encoded by the tmRNA and targeted for degradation. The ribosome is freed to recommence translation, which seems to be the essential function of trans-translation. The protein is SsrA-binding protein of Mycoplasmopsis fermentans (strain ATCC 19989 / NBRC 14854 / NCTC 10117 / PG18) (Mycoplasma fermentans).